Consider the following 999-residue polypeptide: Helicase required for RNAi-mediated heterochromatin assembly 1 (999 aa).

Residues 61 to 90 form a disordered region; that stretch reads EQIETSETSKTQDSEGNKVDKNLKENKSIR. The span at 70–88 shows a compositional bias: basic and acidic residues; that stretch reads KTQDSEGNKVDKNLKENKS. Serine 94 bears the Phosphoserine mark. Basic and acidic residues predominate over residues 106–124; sequence RNDITSGKNREFENEHHPA. Residues 106 to 131 are disordered; that stretch reads RNDITSGKNREFENEHHPASDTSSWR. 393–400 provides a ligand contact to ATP; it reads GPPGTGKS.

Cid12, hrr1 and rdp1 interact forming the RNA-directed RNA polymerase complex (RDRC). The RDRC complex interacts with the RITS complex via interaction between ago1 and hrr1. Clr4 has a role in mediating this interaction.

The protein localises to the cytoplasm. The protein resides in the nucleus. It carries out the reaction ATP + H2O = ADP + phosphate + H(+). Functionally, has a role in the RNA interference (RNAi) pathway which is important for heterochromatin formation and accurate chromosome segregation. A member of the RNA-directed RNA polymerase complex (RDRC) which is involved in the generation of small interfering RNAs (siRNAs) and mediate their association with the RNA-induced transcriptional silencing (RITS) complex. RITS acts as a priming complex for dsRNA synthesis at the site of non-coding centromeric RNA. The polypeptide is Helicase required for RNAi-mediated heterochromatin assembly 1 (hrr1) (Schizosaccharomyces pombe (strain 972 / ATCC 24843) (Fission yeast)).